Reading from the N-terminus, the 589-residue chain is Aspartate--tRNA ligase (589 aa).

Residue E174 coordinates L-aspartate. The aspartate stretch occupies residues 198–201 (QLFK). Residue R220 participates in L-aspartate binding. Residues 220 to 222 (RDE) and Q229 contribute to the ATP site. An L-aspartate-binding site is contributed by H448. E484 is a binding site for ATP. Residue R491 coordinates L-aspartate. 536–539 (GLDR) provides a ligand contact to ATP.

It belongs to the class-II aminoacyl-tRNA synthetase family. Type 1 subfamily. In terms of assembly, homodimer.

It is found in the cytoplasm. It catalyses the reaction tRNA(Asp) + L-aspartate + ATP = L-aspartyl-tRNA(Asp) + AMP + diphosphate. Its function is as follows. Catalyzes the attachment of L-aspartate to tRNA(Asp) in a two-step reaction: L-aspartate is first activated by ATP to form Asp-AMP and then transferred to the acceptor end of tRNA(Asp). This chain is Aspartate--tRNA ligase, found in Leuconostoc citreum (strain KM20).